We begin with the raw amino-acid sequence, 288 residues long: ATP synthase gamma chain (288 aa).

The protein belongs to the ATPase gamma chain family. As to quaternary structure, F-type ATPases have 2 components, CF(1) - the catalytic core - and CF(0) - the membrane proton channel. CF(1) has five subunits: alpha(3), beta(3), gamma(1), delta(1), epsilon(1). CF(0) has three main subunits: a, b and c.

The protein resides in the cell inner membrane. In terms of biological role, produces ATP from ADP in the presence of a proton gradient across the membrane. The gamma chain is believed to be important in regulating ATPase activity and the flow of protons through the CF(0) complex. This Rickettsia bellii (strain OSU 85-389) protein is ATP synthase gamma chain.